Here is a 227-residue protein sequence, read N- to C-terminus: Cytidylate kinase (227 aa).

12–20 provides a ligand contact to ATP; the sequence is GPSGAGKGT.

It belongs to the cytidylate kinase family. Type 1 subfamily.

It localises to the cytoplasm. The enzyme catalyses CMP + ATP = CDP + ADP. It carries out the reaction dCMP + ATP = dCDP + ADP. This chain is Cytidylate kinase, found in Salmonella paratyphi A (strain ATCC 9150 / SARB42).